A 307-amino-acid chain; its full sequence is NADH-ubiquinone oxidoreductase chain 2 (307 aa).

10 helical membrane-spanning segments follow: residues 1 to 21 (MTLQSVLLGAMIILGPILSMT), 25 to 45 (WIIIWIGLEISLLGFVSYYML), 58 to 78 (YFLIQSVSSTVMLLNGLYIFV), 88 to 108 (FIFITMLMLKIGMFPLHFWII), 119 to 139 (IGIVGLLLKIVPMWILMHMGC), 144 to 164 (MLNLITMLSVTSMLFGALIGM), 193 to 213 (LFKYFITYGFSLVILLVFLYL), 217 to 237 (MSISLSLLSLSGLPPFMLFIG), 250 to 270 (LWFIVLVFAILSAVISLVYYL), and 287 to 307 (HYKMAMFLLVNVTFGMLLFLT).

It belongs to the complex I subunit 2 family.

The protein resides in the mitochondrion inner membrane. The enzyme catalyses a ubiquinone + NADH + 5 H(+)(in) = a ubiquinol + NAD(+) + 4 H(+)(out). In terms of biological role, core subunit of the mitochondrial membrane respiratory chain NADH dehydrogenase (Complex I) that is believed to belong to the minimal assembly required for catalysis. Complex I functions in the transfer of electrons from NADH to the respiratory chain. The immediate electron acceptor for the enzyme is believed to be ubiquinone. This Albinaria caerulea (Land snail) protein is NADH-ubiquinone oxidoreductase chain 2 (ND2).